We begin with the raw amino-acid sequence, 197 residues long: Pinin homolog 1 (197 aa).

The segment at 30–73 (LDGKVNNEDSHMEIDQPEGSMEEDDHRQVKEKNTSENSVEQKRG) is disordered. Composition is skewed to basic and acidic residues over residues 34 to 43 (VNNEDSHMEI) and 53 to 71 (DDHRQVKEKNTSENSVEQK).

The protein belongs to the pinin family.

Its subcellular location is the nucleus. The protein resides in the cytoplasm. Functionally, transcriptional activator that may participate in the regulation of mRNA splicing. The sequence is that of Pinin homolog 1 (pnn1) from Schizosaccharomyces pombe (strain 972 / ATCC 24843) (Fission yeast).